A 572-amino-acid chain; its full sequence is Delta-1-pyrroline-5-carboxylate dehydrogenase, mitochondrial (572 aa).

NAD(+) is bound at residue 300 to 305 (GQISTR). E320 functions as the Proton acceptor in the catalytic mechanism. The active-site Nucleophile is C354.

Belongs to the aldehyde dehydrogenase family.

The protein localises to the mitochondrion matrix. The catalysed reaction is L-glutamate 5-semialdehyde + NAD(+) + H2O = L-glutamate + NADH + 2 H(+). It functions in the pathway amino-acid degradation; L-proline degradation into L-glutamate; L-glutamate from L-proline: step 2/2. The protein is Delta-1-pyrroline-5-carboxylate dehydrogenase, mitochondrial (prnC) of Emericella nidulans (strain FGSC A4 / ATCC 38163 / CBS 112.46 / NRRL 194 / M139) (Aspergillus nidulans).